Reading from the N-terminus, the 298-residue chain is Distal tail protein (298 aa).

This sequence belongs to the skunalikevirus distal tail protein family. In terms of assembly, homohexamer. Interacts with the receptor binding protein.

It is found in the virion. Forms the distal part of the tail. Self-associates as two rings organized back to back, with a central channel allowing DNA ejection. The polypeptide is Distal tail protein (Lactococcus phage SK1 (Lactococcus lactis bacteriophage SK1)).